The sequence spans 214 residues: NAD(P)H-quinone oxidoreductase subunit 5, chloroplastic (214 aa).

Transmembrane regions (helical) follow at residues Leu84–Phe104 and Ser152–Phe172.

This sequence belongs to the complex I subunit 5 family. In terms of assembly, NDH is composed of at least 16 different subunits, 5 of which are encoded in the nucleus.

It localises to the plastid. Its subcellular location is the chloroplast thylakoid membrane. It carries out the reaction a plastoquinone + NADH + (n+1) H(+)(in) = a plastoquinol + NAD(+) + n H(+)(out). The catalysed reaction is a plastoquinone + NADPH + (n+1) H(+)(in) = a plastoquinol + NADP(+) + n H(+)(out). NDH shuttles electrons from NAD(P)H:plastoquinone, via FMN and iron-sulfur (Fe-S) centers, to quinones in the photosynthetic chain and possibly in a chloroplast respiratory chain. The immediate electron acceptor for the enzyme in this species is believed to be plastoquinone. Couples the redox reaction to proton translocation, and thus conserves the redox energy in a proton gradient. The protein is NAD(P)H-quinone oxidoreductase subunit 5, chloroplastic (ndhF) of Brachypodium sylvaticum (False brome).